The chain runs to 757 residues: Polyribonucleotide nucleotidyltransferase (757 aa).

Residues Asp482 and Asp488 each contribute to the Mg(2+) site. The 60-residue stretch at Pro549–Met608 folds into the KH domain. The 69-residue stretch at Gly618–Arg686 folds into the S1 motif domain. The interval Gly698–Tyr757 is disordered. Residues Asn702–Asn714 are compositionally biased toward basic and acidic residues. The segment covering Gly725 to Arg734 has biased composition (basic residues).

The protein belongs to the polyribonucleotide nucleotidyltransferase family. The cofactor is Mg(2+).

It localises to the cytoplasm. The enzyme catalyses RNA(n+1) + phosphate = RNA(n) + a ribonucleoside 5'-diphosphate. Involved in mRNA degradation. Catalyzes the phosphorolysis of single-stranded polyribonucleotides processively in the 3'- to 5'-direction. This Wolbachia pipientis wMel protein is Polyribonucleotide nucleotidyltransferase.